The primary structure comprises 972 residues: UPF0746 protein DDB_G0280785 (972 aa).

Residues M1–D19 are compositionally biased toward basic and acidic residues. A disordered region spans residues M1–N30. Residues S44 to F78 enclose the SAP domain.

The protein belongs to the UPF0746 family.

The polypeptide is UPF0746 protein DDB_G0280785 (Dictyostelium discoideum (Social amoeba)).